Here is a 640-residue protein sequence, read N- to C-terminus: Threonine--tRNA ligase (640 aa).

In terms of domain architecture, TGS spans 1-63 (MSSVTVTLPD…SEDCEIEIVT (63 aa)). A catalytic region spans residues 242 to 533 (DHRKLGREMD…LIEHYNGRFP (292 aa)). 3 residues coordinate Zn(2+): C334, H385, and H510.

It belongs to the class-II aminoacyl-tRNA synthetase family. As to quaternary structure, homodimer. Requires Zn(2+) as cofactor.

The protein resides in the cytoplasm. The catalysed reaction is tRNA(Thr) + L-threonine + ATP = L-threonyl-tRNA(Thr) + AMP + diphosphate + H(+). Functionally, catalyzes the attachment of threonine to tRNA(Thr) in a two-step reaction: L-threonine is first activated by ATP to form Thr-AMP and then transferred to the acceptor end of tRNA(Thr). This chain is Threonine--tRNA ligase, found in Halobacterium salinarum (strain ATCC 29341 / DSM 671 / R1).